Here is a 574-residue protein sequence, read N- to C-terminus: Cell division cycle 7-related protein kinase (574 aa).

Phosphoserine is present on Ser27. Residues 58–574 (FKIEDKIGEG…LHPFFKDMSL (517 aa)) enclose the Protein kinase domain. ATP-binding positions include 64 to 72 (IGEGTFSSV) and Lys90. Asp177 functions as the Proton acceptor in the catalytic mechanism. A Glycyl lysine isopeptide (Lys-Gly) (interchain with G-Cter in SUMO2) cross-link involves residue Lys268. Position 503 is a phosphothreonine (Thr503).

Belongs to the protein kinase superfamily. Ser/Thr protein kinase family. CDC7 subfamily. Forms a complex with either DBF4/DBF4A or DBF4B, leading to the activation of the kinase activity. Interacts with CLASPIN (via the acidic patch); the interaction is required for phosphorylation of MCM proteins and CLASPIN. Mg(2+) is required as a cofactor.

It is found in the nucleus. It carries out the reaction L-seryl-[protein] + ATP = O-phospho-L-seryl-[protein] + ADP + H(+). The catalysed reaction is L-threonyl-[protein] + ATP = O-phospho-L-threonyl-[protein] + ADP + H(+). In terms of biological role, kinase involved in initiation of DNA replication. Phosphorylates critical substrates that regulate the G1/S phase transition and initiation of DNA replication, such as MCM proteins and CLASPIN. This chain is Cell division cycle 7-related protein kinase, found in Homo sapiens (Human).